The sequence spans 565 residues: Adenine deaminase (565 aa).

Belongs to the metallo-dependent hydrolases superfamily. Adenine deaminase family. It depends on Mn(2+) as a cofactor.

The catalysed reaction is adenine + H2O + H(+) = hypoxanthine + NH4(+). The protein is Adenine deaminase of Cereibacter sphaeroides (strain ATCC 17025 / ATH 2.4.3) (Rhodobacter sphaeroides).